A 693-amino-acid chain; its full sequence is Elongation factor G (693 aa).

Residues 6 to 286 (KYTRNIGIAA…AICRYLPSPI (281 aa)) form the tr-type G domain. Residues 15-22 (AHIDAGKT), 83-87 (DTPGH), and 137-140 (NKMD) contribute to the GTP site.

The protein belongs to the TRAFAC class translation factor GTPase superfamily. Classic translation factor GTPase family. EF-G/EF-2 subfamily.

It is found in the cytoplasm. In terms of biological role, catalyzes the GTP-dependent ribosomal translocation step during translation elongation. During this step, the ribosome changes from the pre-translocational (PRE) to the post-translocational (POST) state as the newly formed A-site-bound peptidyl-tRNA and P-site-bound deacylated tRNA move to the P and E sites, respectively. Catalyzes the coordinated movement of the two tRNA molecules, the mRNA and conformational changes in the ribosome. The polypeptide is Elongation factor G (Karelsulcia muelleri (strain GWSS) (Sulcia muelleri)).